The primary structure comprises 424 residues: Serine hydroxymethyltransferase (424 aa).

Residues leucine 118 and 122-124 contribute to the (6S)-5,6,7,8-tetrahydrofolate site; that span reads GHL. An N6-(pyridoxal phosphate)lysine modification is found at lysine 227. (6S)-5,6,7,8-tetrahydrofolate is bound at residue 351–353; that stretch reads SPF.

Belongs to the SHMT family. In terms of assembly, homodimer. Pyridoxal 5'-phosphate is required as a cofactor.

The protein localises to the cytoplasm. The enzyme catalyses (6R)-5,10-methylene-5,6,7,8-tetrahydrofolate + glycine + H2O = (6S)-5,6,7,8-tetrahydrofolate + L-serine. The protein operates within one-carbon metabolism; tetrahydrofolate interconversion. It functions in the pathway amino-acid biosynthesis; glycine biosynthesis; glycine from L-serine: step 1/1. In terms of biological role, catalyzes the reversible interconversion of serine and glycine with tetrahydrofolate (THF) serving as the one-carbon carrier. This reaction serves as the major source of one-carbon groups required for the biosynthesis of purines, thymidylate, methionine, and other important biomolecules. Also exhibits THF-independent aldolase activity toward beta-hydroxyamino acids, producing glycine and aldehydes, via a retro-aldol mechanism. This is Serine hydroxymethyltransferase from Pseudothermotoga lettingae (strain ATCC BAA-301 / DSM 14385 / NBRC 107922 / TMO) (Thermotoga lettingae).